A 348-amino-acid chain; its full sequence is Dehydrogenase orsE (348 aa).

43-46 lines the NADP(+) pocket; it reads LDTH. 130–137 lines the substrate pocket; that stretch reads FAVEAAVC. Residues 180–183, 203–206, and 272–273 contribute to the NADP(+) site; these read SSSV, GAHN, and VH. 292–296 lines the substrate pocket; the sequence is NDIAT. 339–340 lines the NADP(+) pocket; the sequence is VS.

It belongs to the zinc-containing alcohol dehydrogenase family. As to quaternary structure, monomer.

In terms of biological role, dehydrogenase; part of the gene cluster that mediates the biosynthesis of orsellinic acid, as well as of the cathepsin K inhibitors F9775 A and F9775 B. The non-reducing polyketide synthase orsA produces orsellinic acid by condensing acetyl-CoA with 3 malonyl-CoA units. Further modifications by the decarboxylase orsB and the tyrosinase-like protein orsC lead to the production of F9775 A and F9775 B. The functions of orsD and orsE remain unclear since only orsB and orsC are required to convert orsellinic acid into F9775 A and F9775 B. The sequence is that of Dehydrogenase orsE from Emericella nidulans (strain FGSC A4 / ATCC 38163 / CBS 112.46 / NRRL 194 / M139) (Aspergillus nidulans).